Consider the following 475-residue polypeptide: Cytochrome P450 monooxygenase opdE (475 aa).

A helical membrane pass occupies residues 10–32; sequence VQNIPVLLLSCGFLAILFRSLVL. Position 457 (C457) interacts with heme.

Belongs to the cytochrome P450 family. Heme serves as cofactor.

It localises to the membrane. It participates in secondary metabolite biosynthesis. In terms of biological role, cytochrome P450 monooxygenase; part of the gene cluster that mediates the biosynthesis of oxopyrrolidines, polyketide-amino acid hybrid compounds with feature structures of tetramic acid. Does not seem to play a role in oxopyrrolidines A and B biosynthesis. May be involved in further modifications of these oxopyrrolidines. The chain is Cytochrome P450 monooxygenase opdE from Penicillium oxalicum (strain 114-2 / CGMCC 5302) (Penicillium decumbens).